Here is a 287-residue protein sequence, read N- to C-terminus: MNSMPHTESNILQVERNIEQIDIKGQYINLASPIHLSGQINITELFAEYSKNIAQSDTGSALQIGVDEAGRGPLLGSVNVASAILPRAWSGLIEAQLLKDTPLSILTDSKQLSEKKRDLLYPLVQQYAIGYIIADIPAAVIDQINILQATMLGMRLCTEILLEVIAHHLNDMAQDIHQLQTAVLFDGNRCPELNYTSLAQLGIKESMIDCQAWVKGDARHTSIAAASILAKVSRDKTMYALDTEHPEYGIAKHKGYPTRAHMEAIETYGVLSAHRRSFAPVRKALES.

The region spanning 61–287 (ALQIGVDEAG…FAPVRKALES (227 aa)) is the RNase H type-2 domain. Residues aspartate 67, glutamate 68, and aspartate 186 each contribute to the a divalent metal cation site.

The protein belongs to the RNase HII family. Requires Mn(2+) as cofactor. Mg(2+) serves as cofactor.

It localises to the cytoplasm. It carries out the reaction Endonucleolytic cleavage to 5'-phosphomonoester.. Its function is as follows. Endonuclease that specifically degrades the RNA of RNA-DNA hybrids. The sequence is that of Ribonuclease HII from Psychrobacter arcticus (strain DSM 17307 / VKM B-2377 / 273-4).